The following is a 27-amino-acid chain: uncharacterized protein (27 aa).

It is found in the plastid. It localises to the cyanelle. This is an uncharacterized protein from Cyanophora paradoxa.